A 338-amino-acid chain; its full sequence is Adenylosuccinate synthetase (338 aa).

GTP contacts are provided by residues 12–18 (GDEGKGK) and 42–44 (GHT). The active-site Proton acceptor is D13. Positions 13 and 42 each coordinate Mg(2+). IMP-binding positions include 13–16 (DEGK), 40–43 (NAGH), T127, R141, Q179, T194, and R256. H43 functions as the Proton donor in the catalytic mechanism. 252–258 (TVTGRRR) is a substrate binding site. Residues R258, 284–286 (CLD), and 324–326 (STG) contribute to the GTP site.

The protein belongs to the adenylosuccinate synthetase family. Homodimer. It depends on Mg(2+) as a cofactor.

It localises to the cytoplasm. It catalyses the reaction IMP + L-aspartate + GTP = N(6)-(1,2-dicarboxyethyl)-AMP + GDP + phosphate + 2 H(+). It participates in purine metabolism; AMP biosynthesis via de novo pathway; AMP from IMP: step 1/2. Its function is as follows. Plays an important role in the de novo pathway of purine nucleotide biosynthesis. Catalyzes the first committed step in the biosynthesis of AMP from IMP. The sequence is that of Adenylosuccinate synthetase from Methanococcus maripaludis (strain C7 / ATCC BAA-1331).